Reading from the N-terminus, the 339-residue chain is MKIFEAYTIKNMCLKNRIVMPPMCMYSSDNTGNINDFHLVHYTTRSIGGVGFIIVEATGITPNGRISDKDLGIWSEKHAEGLSFLVKEVKKYGSKIAIQLNHSGRKYEGTSGEPVAPSALAFDENSKTPKELTKNEIKEIILAFKAAAKRAEKAGFDAIEIHGAHGYLINQFLSPLSNFRDDEYGGSTENRTRFLKEVLEAVREVWPKEKPILLRVSAEDYRGGSGITPNEMVNIINIVKDLIDVVDVSSGGVAPAHINLYPGYQVKLSEVIKNECNVPTIAVGLICDINMVEEILSNNRADLVALGRELLRNPYFVLSSARLKNINIDFPKPYERAFN.

21–24 provides a ligand contact to FMN; that stretch reads PPMC. Tyr26 serves as a coordination point for substrate. Positions 57 and 99 each coordinate FMN. Residue 162–165 participates in substrate binding; that stretch reads HGAH. FMN contacts are provided by residues Arg215 and 307–308; that span reads GR.

This sequence belongs to the NADH:flavin oxidoreductase/NADH oxidase family. NamA subfamily. In terms of assembly, homotetramer. FMN serves as cofactor.

It catalyses the reaction A + NADPH + H(+) = AH2 + NADP(+). In terms of biological role, catalyzes the reduction of the double bond of an array of alpha,beta-unsaturated aldehydes and ketones. It also reduces the nitro group of nitroester and nitroaromatic compounds. It could have a role in detoxification processes. The chain is NADPH dehydrogenase from Clostridium acetobutylicum (strain ATCC 824 / DSM 792 / JCM 1419 / IAM 19013 / LMG 5710 / NBRC 13948 / NRRL B-527 / VKM B-1787 / 2291 / W).